We begin with the raw amino-acid sequence, 284 residues long: Methylglyoxal reductase YeaE (284 aa).

Belongs to the aldo/keto reductase family.

It carries out the reaction hydroxyacetone + NADP(+) = methylglyoxal + NADPH + H(+). The enzyme catalyses a primary alcohol + NADP(+) = an aldehyde + NADPH + H(+). Aldo-keto reductase that contributes to cellular methylglyoxal detoxification by catalyzing the NADPH-dependent conversion of methylglyoxal to acetol. It also exhibits activity with glyoxal and probably plays a significant role in detoxification of glyoxal in vivo. Can also use aromatic aldehydes such as 4-nitrobenzaldehyde, 3-nitrobenzaldehyde and benzaldehyde, and phenylglyoxal. In Escherichia coli (strain K12), this protein is Methylglyoxal reductase YeaE (yeaE).